We begin with the raw amino-acid sequence, 734 residues long: Rho GTPase-activating protein gacL (734 aa).

Positions 141-339 (ISLDTLIAKE…QMILHYDTLF (199 aa)) constitute a Rho-GAP domain. WD repeat units follow at residues 381 to 430 (GHNK…FIKE), 539 to 579 (LFMK…TIHQ), and 585 to 623 (KRPKRMACIEIDDTEYIWIGGDEGSIQIFNSKTFKLEHK).

It localises to the cytoplasm. Functionally, rho GTPase-activating protein involved in the signal transduction pathway. The protein is Rho GTPase-activating protein gacL (gacL) of Dictyostelium discoideum (Social amoeba).